A 292-amino-acid polypeptide reads, in one-letter code: Cyclin-dependent kinase A-2 (292 aa).

The region spanning 4–286 (YEKVEKIGEG…ARAALEHEYF (283 aa)) is the Protein kinase domain. Residues 10–18 (IGEGTYGVV) and Lys33 each bind ATP. Thr14 carries the phosphothreonine modification. Tyr15 bears the Phosphotyrosine mark. Catalysis depends on Asp126, which acts as the Proton acceptor. Thr160 carries the post-translational modification Phosphothreonine.

Belongs to the protein kinase superfamily. CMGC Ser/Thr protein kinase family. CDC2/CDKX subfamily. Expressed in the dividing region of the root apex and in differentiated cells such as those in the sclerenchyma, pericycle and parenchyma of the central cylinder. Expressed in the intercalary meristem and the elongation zone of internodes.

The enzyme catalyses L-seryl-[protein] + ATP = O-phospho-L-seryl-[protein] + ADP + H(+). It catalyses the reaction L-threonyl-[protein] + ATP = O-phospho-L-threonyl-[protein] + ADP + H(+). The catalysed reaction is [DNA-directed RNA polymerase] + ATP = phospho-[DNA-directed RNA polymerase] + ADP + H(+). The protein is Cyclin-dependent kinase A-2 (CDKA-2) of Oryza sativa subsp. japonica (Rice).